A 787-amino-acid polypeptide reads, in one-letter code: GPI ethanolamine phosphate transferase 2 (787 aa).

N-linked (GlcNAc...) asparagine glycans are attached at residues Asn-33, Asn-185, and Asn-397. Helical transmembrane passes span 400–420, 426–446, and 455–475; these read FLTY…VWNF, YIEH…SSFI, and WITI…LVVL. An N-linked (GlcNAc...) asparagine glycan is attached at Asn-485. 2 consecutive transmembrane segments (helical) span residues 504 to 524 and 536 to 556; these read HTSV…FPFL and LLSV…FAIV. N-linked (GlcNAc...) asparagine glycosylation is present at Asn-581. A helical transmembrane segment spans residues 591–611; that stretch reads LVPIARIFFQICGVSIIILLF. A glycan (N-linked (GlcNAc...) asparagine) is linked at Asn-617. Residues 629 to 651 form a helical membrane-spanning segment; it reads VIKFVLLLQTSSANIPLFLIFEI. Asn-669 carries N-linked (GlcNAc...) asparagine glycosylation. The next 4 membrane-spanning stretches (helical) occupy residues 671–693, 699–719, 740–760, and 767–787; these read TFFQ…YNGV, IYVV…YWAL, GTCL…WSVF, and YAAW…LGVL.

Belongs to the PIGG/PIGN/PIGO family. PIGG subfamily.

The protein localises to the endoplasmic reticulum membrane. It functions in the pathway glycolipid biosynthesis; glycosylphosphatidylinositol-anchor biosynthesis. Its function is as follows. Ethanolamine phosphate transferase involved in glycosylphosphatidylinositol-anchor biosynthesis. Transfers ethanolamine phosphate to the GPI second mannose. This is GPI ethanolamine phosphate transferase 2 (LAS21) from Kluyveromyces lactis (strain ATCC 8585 / CBS 2359 / DSM 70799 / NBRC 1267 / NRRL Y-1140 / WM37) (Yeast).